The primary structure comprises 337 residues: m7GpppX diphosphatase (337 aa).

The segment at Met1–Ser37 is disordered. Ala2 carries the post-translational modification N-acetylalanine. The nuclear localization signal (NLS) signature appears at Lys10–Arg13. Phosphoserine is present on residues Ser24 and Ser101. N6-acetyllysine is present on residues Lys138 and Lys142. The nuclear export sequence (NES) motif lies at Lys142–Thr154. Substrate-binding positions include Trp175, Glu185, Asp205, Lys207, and His268–His279. The Histidine triad motif motif lies at His275–His279. The active-site Nucleophile is His277.

This sequence belongs to the HIT family. As to quaternary structure, homodimer. Associates with components of the exosome multienzyme ribonuclease complex, such as EXOSC3 and EXOSC4. Interacts with NDOR1.

Its subcellular location is the cytoplasm. The protein resides in the nucleus. It catalyses the reaction a 5'-end (N(7)-methyl 5'-triphosphoguanosine)-ribonucleoside in mRNA + H2O = N(7)-methyl-GMP + a 5'-end diphospho-ribonucleoside in mRNA + 2 H(+). The hydrolytic product 7-methylguanosine diphosphate (m7GDP) efficiently inhibits the decapping scavenger activity and acts as a competitive inhibitor in vitro. Inhibited by 2,4-diaminoquinazoline. Decapping scavenger enzyme that catalyzes the cleavage of a residual cap structure following the degradation of mRNAs by the 3'-&gt;5' exosome-mediated mRNA decay pathway. Hydrolyzes cap analog structures like 7-methylguanosine nucleoside triphosphate (m7GpppG) with up to 10 nucleotide substrates (small capped oligoribonucleotides) and specifically releases 5'-phosphorylated RNA fragments and 7-methylguanosine monophosphate (m7GMP). Cleaves cap analog structures like tri-methyl guanosine nucleoside triphosphate (m3(2,2,7)GpppG) with very poor efficiency. Does not hydrolyze unmethylated cap analog (GpppG) and shows no decapping activity on intact m7GpppG-capped mRNA molecules longer than 25 nucleotides. Does not hydrolyze 7-methylguanosine diphosphate (m7GDP) to m7GMP. May also play a role in the 5'-&gt;3 mRNA decay pathway; m7GDP, the downstream product released by the 5'-&gt;3' mRNA mediated decapping activity, may be also converted by DCPS to m7GMP. Binds to m7GpppG and strongly to m7GDP. Plays a role in first intron splicing of pre-mRNAs. Inhibits activation-induced cell death. The protein is m7GpppX diphosphatase (DCPS) of Sus scrofa (Pig).